Consider the following 85-residue polypeptide: Kappa-theraphotoxin-Gr1a (85 aa).

The N-terminal stretch at 1–21 (MKTSVFAAILGLALFAVLCSG) is a signal peptide. A propeptide spanning residues 22–49 (SELQEKDLKETLLSAIMETALEAQPEER) is cleaved from the precursor. 3 disulfide bridges follow: cysteine 51-cysteine 65, cysteine 58-cysteine 70, and cysteine 64-cysteine 77. The tract at residues 53-55 (YLF) is involved in active face.

This sequence belongs to the neurotoxin 10 (Hwtx-1) family. 09 (HaTx) subfamily. In terms of tissue distribution, expressed by the venom gland.

The protein resides in the secreted. Inhibits Kv2.1/KCNB1 and Kv4.2/KCND2 voltage-gated potassium channels. Acts as a gating modifier by shifting channel openings to more depolarized voltages and acts via the occupancy of multiple binding sites on the channel. The toxin binding sites are situated on the S3-S4 extracellular linker of the channel. At least two hanatoxin molecules can occupy the Kv2.1/KCNB1 channel, and maybe more (three or four). Can also inhibit calcium channels (Cav2.1/CACNA1A). Needs to partition into the membrane in order to bind to the channel. The chain is Kappa-theraphotoxin-Gr1a from Grammostola rosea (Chilean rose tarantula).